The primary structure comprises 129 residues: Glycine cleavage system H protein (129 aa).

Positions 24-106 (TVVVGVTSYA…YGDGWLIKVR (83 aa)) constitute a Lipoyl-binding domain. Lysine 65 carries the post-translational modification N6-lipoyllysine.

It belongs to the GcvH family. The glycine cleavage system is composed of four proteins: P, T, L and H. (R)-lipoate is required as a cofactor.

The glycine cleavage system catalyzes the degradation of glycine. The H protein shuttles the methylamine group of glycine from the P protein to the T protein. The protein is Glycine cleavage system H protein of Gloeobacter violaceus (strain ATCC 29082 / PCC 7421).